A 170-amino-acid chain; its full sequence is Protein HemX (170 aa).

The segment covering 1–17 (MTEQKNTNENDLQNGTS) has biased composition (polar residues). A disordered region spans residues 1–24 (MTEQKNTNENDLQNGTSKADDDIR). The chain crosses the membrane as a helical span at residues 37–57 (GLIGSAVAILVILAIGGGLYY).

The protein localises to the cell membrane. In Proteus mirabilis, this protein is Protein HemX.